The chain runs to 378 residues: Cytochrome b (378 aa).

4 consecutive transmembrane segments (helical) span residues 34–54 (FGSL…FLAM), 78–99 (WFLR…FIHV), 114–134 (WMIG…GYVL), and 179–199 (FFTF…IHLL). Heme b contacts are provided by histidine 84 and histidine 98. Heme b is bound by residues histidine 183 and histidine 197. Position 202 (histidine 202) interacts with a ubiquinone. Transmembrane regions (helical) follow at residues 227 to 247 (YKDI…IWKF), 289 to 309 (LGGV…PFTH), 321 to 341 (LNQI…WIGA), and 348 to 368 (YVLT…INPL).

It belongs to the cytochrome b family. The main subunits of complex b-c1 are: cytochrome b, cytochrome c1 and the Rieske protein. It depends on heme b as a cofactor.

It localises to the mitochondrion inner membrane. Functionally, component of the ubiquinol-cytochrome c reductase complex (complex III or cytochrome b-c1 complex) that is part of the mitochondrial respiratory chain. The b-c1 complex mediates electron transfer from ubiquinol to cytochrome c. Contributes to the generation of a proton gradient across the mitochondrial membrane that is then used for ATP synthesis. The polypeptide is Cytochrome b (Aedes aegypti (Yellowfever mosquito)).